The primary structure comprises 342 residues: Phosphate acyltransferase (342 aa).

The protein belongs to the PlsX family. In terms of assembly, homodimer. Probably interacts with PlsY.

The protein localises to the cytoplasm. It carries out the reaction a fatty acyl-[ACP] + phosphate = an acyl phosphate + holo-[ACP]. It functions in the pathway lipid metabolism; phospholipid metabolism. In terms of biological role, catalyzes the reversible formation of acyl-phosphate (acyl-PO(4)) from acyl-[acyl-carrier-protein] (acyl-ACP). This enzyme utilizes acyl-ACP as fatty acyl donor, but not acyl-CoA. The chain is Phosphate acyltransferase from Alkalilimnicola ehrlichii (strain ATCC BAA-1101 / DSM 17681 / MLHE-1).